The chain runs to 75 residues: ORF2p protein (75 aa).

Residues 13-18 (WIGHPV) are important for viral replication in intestinal cells. A transmembrane span lies at residues 23 to 45 (IVYLFVGFTPLTLETLHTLNYII). The tract at residues 53 to 75 (APRSPHSDPARMRIPTQPRKAPL) is disordered.

The protein resides in the host cytoplasmic vesicle membrane. In terms of biological role, facilitates virus release from intestinal cells in vitro, possibly through the host autophagic pathway. The sequence is that of ORF2p protein from Human enterovirus 71 (strain USA/BrCr/1970) (EV71).